A 429-amino-acid chain; its full sequence is MDQNTLIKTAQQILDTTTELSKHLAESDIAIPNDLNVGTTSGLWTTHNAEIEALRLKITGLSQNLGMLLEGPHGFLHEYVSVNWEHGALYTLLDHNVLEQIPLDGSKIAIADLATRVGLPADKLLRICRLVATVGIIREDTEGEFSHTAISETLVKDQGYKSFIGFQTFETRVASAHLADSLRKPNPYWNEGQAAFELAWGMPMYDWHREHPEKGKRFAQAMQSVSKNLDAGNDMIIQWVKGSEGLQNGKPLHVVEIQGKTGAFSAELATLYPNAEFEVQDTSADLISRGKQTLDPELASRVKFSQRDLFAVRKCDEVSDFTDNTVVFLLRGVLWNHSDEEVITLLRSFLPAMEHGIKPIVLISDLVSPIWATFESHVERAFRRRDVTLTTMHNVKQRTSTEWSQLLQSADPNFKVCAFPVDLFGIFEN.

An S-adenosyl-L-methionine-binding site is contributed by Asp-285.

This sequence belongs to the class I-like SAM-binding methyltransferase superfamily. Cation-independent O-methyltransferase family. COMT subfamily.

The catalysed reaction is (2'R)-atrovenetin + S-adenosyl-L-methionine = deoxyherqueinone + S-adenosyl-L-homocysteine + H(+). It functions in the pathway secondary metabolite biosynthesis. In terms of biological role, O-methyltransferase; part of the gene cluster that mediates the biosynthesis of phenalenones such as herqueinone, compounds that have been reported to treat tumors, bacterial infections and/or mycoses, and rheumatic diseases. The non-reducing polyketide synthase phnA synthesizes the heptaketide backbone and cyclizes it into the angular, hemiketal-containing naphtho-gamma-pyrone prephenalenone. The product template (PT) domain of phnA catalyzes only the C4-C9 aldol condensation, which is unprecedented among known PT domains. The transformation of prephenalenone to phenalenones requires an FAD-dependent monooxygenase phnB, which catalyzes the C2 aromatic hydroxylation of prephenalenone and ring opening of the gamma-pyrone ring simultaneously. Subsequent intramolecular deprotonation of C3 phenolic oxygen accelerates phenalenone ring closure to yield the tricyclic phenalenone core with a C2 hydroxylation. The prenyltransferase phnF further catalyzes reverse C-prenylation of phenalenone by direct electrophilic substitution at C6, or possibly via first a forward O-prenylation of a neighboring phenol in phenalenone, followed by a Claisen rearrangement. The hydroalkoxylation enzyme phnH catalyzes the 5-exo-trig cyclization via acid catalysis after the spontaneous deprotonation of 7-OH, which leads to the formation of the dihydrobenzofuran atrovenetin. Atrovenetin is further converted to deoxyherqueinone by the O-methyltransferase phnC which can methylate C2-OH to stabilize the northern portion of the phenalenone core. Finally, the oxidoreductase phnG converts deoxyherqueinone to herqueinone via C6 hydroxylation. This Penicillium herquei protein is O-methyltransferase phnC.